A 326-amino-acid polypeptide reads, in one-letter code: 4-hydroxy-3-methylbut-2-enyl diphosphate reductase 1 (326 aa).

C27 is a [4Fe-4S] cluster binding site. The (2E)-4-hydroxy-3-methylbut-2-enyl diphosphate site is built by H56 and H89. Residues H56 and H89 each coordinate dimethylallyl diphosphate. The isopentenyl diphosphate site is built by H56 and H89. C111 is a [4Fe-4S] cluster binding site. Residue H139 participates in (2E)-4-hydroxy-3-methylbut-2-enyl diphosphate binding. H139 contacts dimethylallyl diphosphate. Position 139 (H139) interacts with isopentenyl diphosphate. The active-site Proton donor is E141. T179 is a (2E)-4-hydroxy-3-methylbut-2-enyl diphosphate binding site. C209 provides a ligand contact to [4Fe-4S] cluster. Residues S237, S238, N239, and S281 each contribute to the (2E)-4-hydroxy-3-methylbut-2-enyl diphosphate site. Dimethylallyl diphosphate contacts are provided by S237, S238, N239, and S281. Residues S237, S238, N239, and S281 each contribute to the isopentenyl diphosphate site.

Belongs to the IspH family. It depends on [4Fe-4S] cluster as a cofactor.

It catalyses the reaction isopentenyl diphosphate + 2 oxidized [2Fe-2S]-[ferredoxin] + H2O = (2E)-4-hydroxy-3-methylbut-2-enyl diphosphate + 2 reduced [2Fe-2S]-[ferredoxin] + 2 H(+). The enzyme catalyses dimethylallyl diphosphate + 2 oxidized [2Fe-2S]-[ferredoxin] + H2O = (2E)-4-hydroxy-3-methylbut-2-enyl diphosphate + 2 reduced [2Fe-2S]-[ferredoxin] + 2 H(+). The protein operates within isoprenoid biosynthesis; dimethylallyl diphosphate biosynthesis; dimethylallyl diphosphate from (2E)-4-hydroxy-3-methylbutenyl diphosphate: step 1/1. It functions in the pathway isoprenoid biosynthesis; isopentenyl diphosphate biosynthesis via DXP pathway; isopentenyl diphosphate from 1-deoxy-D-xylulose 5-phosphate: step 6/6. Catalyzes the conversion of 1-hydroxy-2-methyl-2-(E)-butenyl 4-diphosphate (HMBPP) into a mixture of isopentenyl diphosphate (IPP) and dimethylallyl diphosphate (DMAPP). Acts in the terminal step of the DOXP/MEP pathway for isoprenoid precursor biosynthesis. This is 4-hydroxy-3-methylbut-2-enyl diphosphate reductase 1 from Burkholderia pseudomallei (strain K96243).